The following is a 358-amino-acid chain: MVDIIFNSSFLGDMGDHSKKKSGIAMCVGCGSQIHDQYILRVAPDLEWHAACLKCAECSQYLDETCTCFVRDGKTYCKRDYVRLFGIKCANCNIGFCSSDLVMRARDNVYHMECFRCSVCSRHLLPGDEFSLRDEELLCRADHGLLMEQASAGSPLSPGIIHSRSLHIADPVSVRQPPHRNHVHKQSEKTTRVRTVLNEKQLHTLRTCYNANPRPDALMKEQLVEMTGLSPRVIRVWFQNKRCKDKKRSIFMKQLQQQHHSDKTNLQGLTGTPLVAGSPIRHDNTVQGNPVEVQTYQPPWKALSEFALQSDLDQPAFQQLVSFSESGSMGNSSGSDVTSLSSQLPDTPNSMVASPVDT.

LIM zinc-binding domains lie at 27–80 (CVGC…CKRD) and 89–143 (CANC…RADH). A DNA-binding region (homeobox) is located at residues 190-249 (TTRVRTVLNEKQLHTLRTCYNANPRPDALMKEQLVEMTGLSPRVIRVWFQNKRCKDKKRS). Over residues 325–335 (ESGSMGNSSGS) the composition is skewed to low complexity. A disordered region spans residues 325–358 (ESGSMGNSSGSDVTSLSSQLPDTPNSMVASPVDT). A compositionally biased stretch (polar residues) spans 336 to 358 (DVTSLSSQLPDTPNSMVASPVDT).

The protein resides in the nucleus. In terms of biological role, binds to one of the cis-acting domain of the insulin gene enhancer. May be involved in subtype specialization of primary motoneurons. The chain is Insulin gene enhancer protein ISL-2A (isl2a) from Oncorhynchus tshawytscha (Chinook salmon).